A 276-amino-acid chain; its full sequence is E3 ubiquitin-protein ligase CCNB1IP1 (276 aa).

An RING-type; atypical zinc finger spans residues Cys-10–Asn-52. A coiled-coil region spans residues Met-146–Arg-182.

In terms of assembly, interacts with CCNB1, UBE2L3 and NF2. In terms of processing, ubiquitinated; autoubiquitinated. Phosphorylated by CDK1 on serine or threonine residues (in vitro). In terms of tissue distribution, expressed predominantly in the testes and 17 day embryos (corresponding to prophase I in females). Weakly or not expressed in other tissues.

The protein resides in the nucleus. Its subcellular location is the chromosome. It catalyses the reaction S-ubiquitinyl-[E2 ubiquitin-conjugating enzyme]-L-cysteine + [acceptor protein]-L-lysine = [E2 ubiquitin-conjugating enzyme]-L-cysteine + N(6)-ubiquitinyl-[acceptor protein]-L-lysine.. It participates in protein modification; protein ubiquitination. In terms of biological role, ubiquitin E3 ligase that acts as a limiting factor for crossing-over during meiosis: required during zygonema to limit the colocalization of RNF212 with MutS-gamma-associated recombination sites and thereby establish early differentiation of crossover and non-crossover sites. Later, it is directed by MutL-gamma to stably accumulate at designated crossover sites. Probably promotes the dissociation of RNF212 and MutS-gamma to allow the progression of recombination and the implementation of the final steps of crossing over. Modulates cyclin-B levels and participates in the regulation of cell cycle progression through the G2 phase. Overexpression causes delayed entry into mitosis. This chain is E3 ubiquitin-protein ligase CCNB1IP1 (Ccnb1ip1), found in Mus musculus (Mouse).